The primary structure comprises 285 residues: VQ motif-containing protein 20 (285 aa).

Basic and acidic residues predominate over residues 1 to 10 (MSSTYKDNHP). The disordered stretch occupies residues 1–68 (MSSTYKDNHP…PSPSSFSSAA (68 aa)). Residues 11-23 (YHHHPHHHHHHPK) show a composition bias toward basic residues. The short motif at 91–100 (FMALVQKLTG) is the VQ element. Positions 195–218 (YSAVAIPPQPPPHPPPPPPPPSMY) are disordered. Pro residues predominate over residues 201–216 (PPQPPPHPPPPPPPPS).

The protein localises to the nucleus. In terms of biological role, may function as negative regulator of plant defense. The sequence is that of VQ motif-containing protein 20 from Arabidopsis thaliana (Mouse-ear cress).